The following is an 87-amino-acid chain: RNA-binding protein Hfq (87 aa).

Positions 9 to 68 (DPFLNALRRERIPVSIYLVNGIKLQGQIESFDQFVILLKNTVSQMVYKHAISTVVPARAV) constitute a Sm domain.

This sequence belongs to the Hfq family. As to quaternary structure, homohexamer.

Its function is as follows. RNA chaperone that binds small regulatory RNA (sRNAs) and mRNAs to facilitate mRNA translational regulation in response to envelope stress, environmental stress and changes in metabolite concentrations. Also binds with high specificity to tRNAs. The chain is RNA-binding protein Hfq from Aeromonas salmonicida (strain A449).